The sequence spans 528 residues: Importin subunit alpha-7 (528 aa).

Positions methionine 1–serine 56 constitute an IBB domain. 8 ARM repeats span residues asparagine 93–serine 133, serine 136–glycine 175, proline 178–arginine 218, lysine 220–aspartate 259, asparagine 262–threonine 301, aspartate 304–alanine 344, glutamine 347–alanine 386, and tyrosine 390–lysine 429.

Belongs to the importin alpha family. In terms of assembly, forms a complex with importin subunit beta-1.

It is found in the nucleus envelope. Functionally, binds to conventional NLS motifs and mediates nuclear protein import across the nuclear envelope. Acts as a cellular receptor for the nuclear import of the virD2 protein of Agrobacterium, but is not essential for Agrobacterium-mediated root transformation. This is Importin subunit alpha-7 from Arabidopsis thaliana (Mouse-ear cress).